Reading from the N-terminus, the 75-residue chain is DNA-directed RNA polymerase subunit epsilon (75 aa).

It belongs to the RNA polymerase subunit epsilon family. In terms of assembly, RNAP is composed of a core of 2 alpha, a beta and a beta' subunit. The core is associated with a delta subunit, and at least one of epsilon or omega. When a sigma factor is associated with the core the holoenzyme is formed, which can initiate transcription.

It carries out the reaction RNA(n) + a ribonucleoside 5'-triphosphate = RNA(n+1) + diphosphate. A non-essential component of RNA polymerase (RNAP). This Lactobacillus gasseri (strain ATCC 33323 / DSM 20243 / BCRC 14619 / CIP 102991 / JCM 1131 / KCTC 3163 / NCIMB 11718 / NCTC 13722 / AM63) protein is DNA-directed RNA polymerase subunit epsilon.